A 455-amino-acid polypeptide reads, in one-letter code: Bifunctional protein GlmU (455 aa).

Positions 1–225 (MNIVILAAGL…EWETLGVNSK (225 aa)) are pyrophosphorylase. UDP-N-acetyl-alpha-D-glucosamine contacts are provided by residues 6 to 9 (LAAG), lysine 20, glutamine 71, 76 to 77 (GT), 98 to 100 (YGD), glycine 135, glutamate 150, asparagine 165, and asparagine 223. Aspartate 100 contributes to the Mg(2+) binding site. Position 223 (asparagine 223) interacts with Mg(2+). Residues 226 to 246 (VQLAELERIHQRNLAQQLLED) form a linker region. The interval 247–455 (GVTLIDPARI…QRPVKQKKDA (209 aa)) is N-acetyltransferase. 2 residues coordinate UDP-N-acetyl-alpha-D-glucosamine: arginine 329 and lysine 347. The active-site Proton acceptor is the histidine 359. Residues tyrosine 362 and asparagine 373 each contribute to the UDP-N-acetyl-alpha-D-glucosamine site. Acetyl-CoA-binding positions include alanine 376, 382-383 (NY), serine 401, alanine 419, and arginine 436.

It in the N-terminal section; belongs to the N-acetylglucosamine-1-phosphate uridyltransferase family. The protein in the C-terminal section; belongs to the transferase hexapeptide repeat family. As to quaternary structure, homotrimer. Requires Mg(2+) as cofactor.

It is found in the cytoplasm. The enzyme catalyses alpha-D-glucosamine 1-phosphate + acetyl-CoA = N-acetyl-alpha-D-glucosamine 1-phosphate + CoA + H(+). It catalyses the reaction N-acetyl-alpha-D-glucosamine 1-phosphate + UTP + H(+) = UDP-N-acetyl-alpha-D-glucosamine + diphosphate. It functions in the pathway nucleotide-sugar biosynthesis; UDP-N-acetyl-alpha-D-glucosamine biosynthesis; N-acetyl-alpha-D-glucosamine 1-phosphate from alpha-D-glucosamine 6-phosphate (route II): step 2/2. The protein operates within nucleotide-sugar biosynthesis; UDP-N-acetyl-alpha-D-glucosamine biosynthesis; UDP-N-acetyl-alpha-D-glucosamine from N-acetyl-alpha-D-glucosamine 1-phosphate: step 1/1. Its pathway is bacterial outer membrane biogenesis; LPS lipid A biosynthesis. Catalyzes the last two sequential reactions in the de novo biosynthetic pathway for UDP-N-acetylglucosamine (UDP-GlcNAc). The C-terminal domain catalyzes the transfer of acetyl group from acetyl coenzyme A to glucosamine-1-phosphate (GlcN-1-P) to produce N-acetylglucosamine-1-phosphate (GlcNAc-1-P), which is converted into UDP-GlcNAc by the transfer of uridine 5-monophosphate (from uridine 5-triphosphate), a reaction catalyzed by the N-terminal domain. This Ralstonia nicotianae (strain ATCC BAA-1114 / GMI1000) (Ralstonia solanacearum) protein is Bifunctional protein GlmU.